The primary structure comprises 127 residues: Holo-[acyl-carrier-protein] synthase (127 aa).

2 residues coordinate Mg(2+): Asp-9 and Glu-58.

It belongs to the P-Pant transferase superfamily. AcpS family. Mg(2+) serves as cofactor.

The protein resides in the cytoplasm. It carries out the reaction apo-[ACP] + CoA = holo-[ACP] + adenosine 3',5'-bisphosphate + H(+). Functionally, transfers the 4'-phosphopantetheine moiety from coenzyme A to a Ser of acyl-carrier-protein. The sequence is that of Holo-[acyl-carrier-protein] synthase from Shewanella baltica (strain OS155 / ATCC BAA-1091).